A 494-amino-acid chain; its full sequence is Transcriptional regulator of yeast form adherence 3 (494 aa).

In terms of domain architecture, SPX spans 1–360 (MKFAKTLERT…SLGIQKTFPK (360 aa)). An RING-type zinc finger spans residues 398–437 (CPICMNIAYKPIRLSCGHLFCVRCLVKMKQDDKTSCPLCR).

Its subcellular location is the nucleus. Transcription factor required for yeast cell adherence to silicone substrate. The sequence is that of Transcriptional regulator of yeast form adherence 3 (TRY3) from Candida albicans (strain SC5314 / ATCC MYA-2876) (Yeast).